A 275-amino-acid polypeptide reads, in one-letter code: Bis(5'-nucleosyl)-tetraphosphatase, symmetrical (275 aa).

It belongs to the Ap4A hydrolase family.

The catalysed reaction is P(1),P(4)-bis(5'-adenosyl) tetraphosphate + H2O = 2 ADP + 2 H(+). Its function is as follows. Hydrolyzes diadenosine 5',5'''-P1,P4-tetraphosphate to yield ADP. This Stutzerimonas stutzeri (strain A1501) (Pseudomonas stutzeri) protein is Bis(5'-nucleosyl)-tetraphosphatase, symmetrical.